The chain runs to 451 residues: Bifunctional protein GlmU (451 aa).

Residues 1–217 (MKTLILAAGL…IDEVTGVNDR (217 aa)) form a pyrophosphorylase region. UDP-N-acetyl-alpha-D-glucosamine-binding positions include 6–9 (LAAG), K20, Q68, 73–74 (GT), 95–97 (YGD), G134, E146, N161, and N215. D97 serves as a coordination point for Mg(2+). A Mg(2+)-binding site is contributed by N215. The tract at residues 218 to 238 (IQLSKLEKNMRKRINEKLMRE) is linker. The segment at 239 to 451 (GVRIIDPESV…GGNQNADSKE (213 aa)) is N-acetyltransferase. 2 residues coordinate UDP-N-acetyl-alpha-D-glucosamine: R320 and K338. H350 (proton acceptor) is an active-site residue. The UDP-N-acetyl-alpha-D-glucosamine site is built by Y353 and N364. Acetyl-CoA-binding positions include A367, 373 to 374 (NY), S392, A410, and R427.

The protein in the N-terminal section; belongs to the N-acetylglucosamine-1-phosphate uridyltransferase family. This sequence in the C-terminal section; belongs to the transferase hexapeptide repeat family. As to quaternary structure, homotrimer. Mg(2+) is required as a cofactor.

The protein localises to the cytoplasm. It catalyses the reaction alpha-D-glucosamine 1-phosphate + acetyl-CoA = N-acetyl-alpha-D-glucosamine 1-phosphate + CoA + H(+). It carries out the reaction N-acetyl-alpha-D-glucosamine 1-phosphate + UTP + H(+) = UDP-N-acetyl-alpha-D-glucosamine + diphosphate. It participates in nucleotide-sugar biosynthesis; UDP-N-acetyl-alpha-D-glucosamine biosynthesis; N-acetyl-alpha-D-glucosamine 1-phosphate from alpha-D-glucosamine 6-phosphate (route II): step 2/2. Its pathway is nucleotide-sugar biosynthesis; UDP-N-acetyl-alpha-D-glucosamine biosynthesis; UDP-N-acetyl-alpha-D-glucosamine from N-acetyl-alpha-D-glucosamine 1-phosphate: step 1/1. The protein operates within bacterial outer membrane biogenesis; LPS lipid A biosynthesis. Catalyzes the last two sequential reactions in the de novo biosynthetic pathway for UDP-N-acetylglucosamine (UDP-GlcNAc). The C-terminal domain catalyzes the transfer of acetyl group from acetyl coenzyme A to glucosamine-1-phosphate (GlcN-1-P) to produce N-acetylglucosamine-1-phosphate (GlcNAc-1-P), which is converted into UDP-GlcNAc by the transfer of uridine 5-monophosphate (from uridine 5-triphosphate), a reaction catalyzed by the N-terminal domain. The sequence is that of Bifunctional protein GlmU from Thermosipho africanus (strain TCF52B).